The sequence spans 101 residues: Small ribosomal subunit protein uS14 (101 aa).

The segment at 1-20 is disordered; that stretch reads MAKTSAVNRNKMRERMASRD. Basic and acidic residues predominate over residues 11–20; the sequence is KMRERMASRD.

Belongs to the universal ribosomal protein uS14 family. Part of the 30S ribosomal subunit. Contacts proteins S3 and S10.

Its function is as follows. Binds 16S rRNA, required for the assembly of 30S particles and may also be responsible for determining the conformation of the 16S rRNA at the A site. The polypeptide is Small ribosomal subunit protein uS14 (Granulibacter bethesdensis (strain ATCC BAA-1260 / CGDNIH1)).